The sequence spans 434 residues: Glutamate-1-semialdehyde 2,1-aminomutase (434 aa).

Lys-270 carries the N6-(pyridoxal phosphate)lysine modification.

Belongs to the class-III pyridoxal-phosphate-dependent aminotransferase family. HemL subfamily. Homodimer. Pyridoxal 5'-phosphate is required as a cofactor.

The protein localises to the cytoplasm. The enzyme catalyses (S)-4-amino-5-oxopentanoate = 5-aminolevulinate. It functions in the pathway porphyrin-containing compound metabolism; protoporphyrin-IX biosynthesis; 5-aminolevulinate from L-glutamyl-tRNA(Glu): step 2/2. In Pelotomaculum thermopropionicum (strain DSM 13744 / JCM 10971 / SI), this protein is Glutamate-1-semialdehyde 2,1-aminomutase.